A 484-amino-acid polypeptide reads, in one-letter code: Glutamate--tRNA ligase (484 aa).

The 'HIGH' region motif lies at 11-21 (PSPTGYLHIGN). Residues 252 to 256 (KLSKR) carry the 'KMSKS' region motif. Residue Lys255 coordinates ATP.

This sequence belongs to the class-I aminoacyl-tRNA synthetase family. Glutamate--tRNA ligase type 1 subfamily. In terms of assembly, monomer.

The protein resides in the cytoplasm. The enzyme catalyses tRNA(Glu) + L-glutamate + ATP = L-glutamyl-tRNA(Glu) + AMP + diphosphate. Functionally, catalyzes the attachment of glutamate to tRNA(Glu) in a two-step reaction: glutamate is first activated by ATP to form Glu-AMP and then transferred to the acceptor end of tRNA(Glu). The polypeptide is Glutamate--tRNA ligase (Staphylococcus aureus (strain MRSA252)).